The sequence spans 333 residues: Cell shape-determining protein Mbl (333 aa).

ATP contacts are provided by residues 12–14 (TAN), 156–158 (GGT), 204–207 (EDIK), and 284–287 (GGAL).

This sequence belongs to the FtsA/MreB family. As to quaternary structure, forms polymers.

It is found in the cytoplasm. Forms membrane-associated dynamic filaments that are essential for cell shape determination. Acts by regulating cell wall synthesis and cell elongation, and thus cell shape. A feedback loop between cell geometry and Mbl localization may maintain elongated cell shape by targeting cell wall growth to regions of negative cell wall curvature. In Bacillus cereus (strain ATCC 10987 / NRS 248), this protein is Cell shape-determining protein Mbl.